Reading from the N-terminus, the 129-residue chain is Small ribosomal subunit protein uS8c (129 aa).

Belongs to the universal ribosomal protein uS8 family. In terms of assembly, part of the 30S ribosomal subunit.

Its subcellular location is the plastid. It localises to the chloroplast. Functionally, one of the primary rRNA binding proteins, it binds directly to 16S rRNA central domain where it helps coordinate assembly of the platform of the 30S subunit. This chain is Small ribosomal subunit protein uS8c (rps8), found in Nephroselmis olivacea (Green alga).